We begin with the raw amino-acid sequence, 492 residues long: Membrane-bound glycerophospholipid O-acyltransferase 1 (492 aa).

6 consecutive transmembrane segments (helical) span residues 33-53 (VNFVACQLFALSAAFWFRIYL), 69-89 (ILGIYFVVFCFGWYAVHLFVL), 125-145 (IYIFHYGILTTDFSGPLMIVT), 179-199 (PSLLEYLSYHLNFMSVIAGPC), 237-257 (MGAVIQKLCVTLMSLLLFLTL), and 296-316 (YFAWTLADAVHNAAGFGFNGM). Active-site residues include N349 and H380. 3 helical membrane passes run 370 to 390 (VLTFLLSALWHGVYPGYYFTF), 423 to 443 (VVTWAVTQLAVSYTAAPFVML), and 452 to 472 (YKSVFFFLHIICLLIILFLPI). S486 bears the Phosphoserine mark.

It belongs to the membrane-bound acyltransferase family. In terms of tissue distribution, highly expressed in stomach, epididymis, and colon.

The protein resides in the endoplasmic reticulum membrane. The catalysed reaction is a 1-acyl-sn-glycero-3-phosphoethanolamine + an acyl-CoA = a 1,2-diacyl-sn-glycero-3-phosphoethanolamine + CoA. It catalyses the reaction a 1-acyl-sn-glycero-3-phospho-L-serine + an acyl-CoA = a 1,2-diacyl-sn-glycero-3-phospho-L-serine + CoA. The enzyme catalyses a 1-acyl-sn-glycero-3-phosphocholine + an acyl-CoA = a 1,2-diacyl-sn-glycero-3-phosphocholine + CoA. It carries out the reaction a 1-O-(1Z-alkenyl)-sn-glycero-3-phosphoethanolamine + (9Z)-octadecenoyl-CoA = 1-O-(1Z)-alkenyl-2-(9Z)-octadecenoyl-sn-glycero-3-phosphoethanolamine + CoA. The catalysed reaction is 1-octadecanoyl-sn-glycero-3-phosphoethanolamine + (9Z)-octadecenoyl-CoA = 1-octadecanoyl-2-(9Z-octadecenoyl)-sn-glycero-3-phosphoethanolamine + CoA. It catalyses the reaction 1-(9Z-octadecenoyl)-sn-glycero-3-phospho-L-serine + (9Z)-octadecenoyl-CoA = 1,2-di-(9Z)-octadecenoyl-sn-glycero-3-phospho-L-serine + CoA. The enzyme catalyses 1-(9Z-octadecenoyl)-sn-glycero-3-phosphoethanolamine + (9Z)-octadecenoyl-CoA = 1,2-di-(9Z-octadecenoyl)-sn-glycero-3-phosphoethanolamine + CoA. It carries out the reaction 1-hexadecanoyl-sn-glycero-3-phosphoethanolamine + (9Z)-octadecenoyl-CoA = 1-hexadecanoyl-2-(9Z-octadecenoyl)-sn-glycero-3-phosphoethanolamine + CoA. The catalysed reaction is 1-(10Z-heptadecenoyl)-sn-glycero-3-phosphoethanolamine + hexadecanoyl-CoA = 1-(10Z-heptadecenoyl)-2-hexadecanoyl-sn-glycero-3-phosphoethanolamine + CoA. It catalyses the reaction 1-(9Z-octadecenoyl)-sn-glycero-3-phospho-L-serine + octadecanoyl-CoA = 1-(9Z-octadecenoyl)-2-octadecanoyl-sn-glycero-3-phospho-L-serine + CoA. The enzyme catalyses 1-(9Z-octadecenoyl)-sn-glycero-3-phospho-L-serine + (9Z)-hexadecenoyl-CoA = 1-(9Z-octadecenoyl)-2-(9Z-hexadecenoyl)-sn-glycero-3-phospho-L-serine + CoA. It carries out the reaction 1-(9Z-octadecenoyl)-sn-glycero-3-phospho-L-serine + (9Z,12Z)-octadecadienoyl-CoA = 1-(9Z-octadecenoyl)-2-(9Z,12Z-octadienoyl)-sn-glycero-3-phospho-L-serine + CoA. The catalysed reaction is 1-hexadecanoyl-sn-glycero-3-phosphocholine + (9Z)-octadecenoyl-CoA = 1-hexadecanoyl-2-(9Z-octadecenoyl)-sn-glycero-3-phosphocholine + CoA. It catalyses the reaction 1-(10Z-heptadecenoyl)-sn-glycero-3-phosphoethanolamine + (9Z)-octadecenoyl-CoA = 1-(10Z-heptadecenoyl)-2-(9Z-octadecenoyl)-sn-glycero-3-phosphoethanolamine + CoA. Its pathway is lipid metabolism; phospholipid metabolism. Acyltransferase which catalyzes the transfer of an acyl group from an acyl-CoA towards a lysophospholipid producing a phospholipid and participates in the reacylation step of the phospholipid remodeling pathway also known as the Lands cycle. Acts on lysophosphatidylserine (1-acyl-2-hydroxy-sn-glycero-3-phospho-L-serine or LPS) and lysophosphatidylethanolamine (1-acyl-sn-glycero-3-phosphoethanolamine or LPE), and to a lesser extend lysophosphatidylcholine. Prefers oleoyl-CoA as the acyl donor and 1-oleoyl-LPE as acceptor. May play a role in neurite outgrowth during neuronal differentiation. The chain is Membrane-bound glycerophospholipid O-acyltransferase 1 from Mus musculus (Mouse).